The primary structure comprises 198 residues: Imidazoleglycerol-phosphate dehydratase (198 aa).

Belongs to the imidazoleglycerol-phosphate dehydratase family.

It is found in the cytoplasm. It catalyses the reaction D-erythro-1-(imidazol-4-yl)glycerol 3-phosphate = 3-(imidazol-4-yl)-2-oxopropyl phosphate + H2O. It functions in the pathway amino-acid biosynthesis; L-histidine biosynthesis; L-histidine from 5-phospho-alpha-D-ribose 1-diphosphate: step 6/9. The sequence is that of Imidazoleglycerol-phosphate dehydratase from Nitratidesulfovibrio vulgaris (strain DP4) (Desulfovibrio vulgaris).